A 452-amino-acid chain; its full sequence is tRNA pseudouridine synthase Pus10 (452 aa).

A THUMP domain is found at 71–200 (EMLRALAPSC…DGHVEIQIQP (130 aa)). Asp269 (nucleophile) is an active-site residue. Tyr335 and Tyr406 together coordinate substrate.

It belongs to the pseudouridine synthase Pus10 family.

The enzyme catalyses uridine(54) in tRNA = pseudouridine(54) in tRNA. It carries out the reaction uridine(55) in tRNA = pseudouridine(55) in tRNA. Its function is as follows. Responsible for synthesis of pseudouridine from uracil-54 and uracil-55 in the psi GC loop of transfer RNAs. The polypeptide is tRNA pseudouridine synthase Pus10 (Methanothrix thermoacetophila (strain DSM 6194 / JCM 14653 / NBRC 101360 / PT) (Methanosaeta thermophila)).